A 368-amino-acid chain; its full sequence is 4-hydroxy-3-methylbut-2-en-1-yl diphosphate synthase (flavodoxin) (368 aa).

The [4Fe-4S] cluster site is built by Cys268, Cys271, Cys303, and Glu310.

It belongs to the IspG family. It depends on [4Fe-4S] cluster as a cofactor.

It carries out the reaction (2E)-4-hydroxy-3-methylbut-2-enyl diphosphate + oxidized [flavodoxin] + H2O + 2 H(+) = 2-C-methyl-D-erythritol 2,4-cyclic diphosphate + reduced [flavodoxin]. The protein operates within isoprenoid biosynthesis; isopentenyl diphosphate biosynthesis via DXP pathway; isopentenyl diphosphate from 1-deoxy-D-xylulose 5-phosphate: step 5/6. Converts 2C-methyl-D-erythritol 2,4-cyclodiphosphate (ME-2,4cPP) into 1-hydroxy-2-methyl-2-(E)-butenyl 4-diphosphate. In Listeria monocytogenes serotype 4b (strain CLIP80459), this protein is 4-hydroxy-3-methylbut-2-en-1-yl diphosphate synthase (flavodoxin).